We begin with the raw amino-acid sequence, 432 residues long: Calcium uptake protein 2, mitochondrial (432 aa).

The transit peptide at 1 to 22 (MAAAAGRSAWLAAWGGRLRRGL) directs the protein to the mitochondrion. The EF-hand 1 domain maps to 169 to 204 (KPHSGFHVAFKMLDVDGNEMIERKEFVKLQKIISKQ). Asp-182, Asp-184, Asn-186, Met-188, Glu-190, and Glu-193 together coordinate Ca(2+). Ser-202 bears the Phosphoserine mark. Residues 224–259 (EPGVNTTLQVRFFGKRGEKKLHYKEFRRFMENLQTE) form the EF-hand 2; degenerate domain. The EF-hand 3; degenerate domain occupies 290-325 (TENKDIYWRNVREKLSVGESISLDEFKSFCHFTTHL). Positions 359–394 (LSDNLLDTVFKIFDLDGDECLSHGEFLGVLKNRMHR) constitute an EF-hand 4 domain. Asp-372, Asp-374, Asp-376, Cys-378, and Glu-383 together coordinate Ca(2+).

The protein belongs to the MICU1 family. MICU2 subfamily. As to quaternary structure, heterodimer; disulfide-linked; heterodimerizes with MICU1. Component of the uniplex complex, composed of MCU, EMRE/SMDT1, MICU1 and MICU2 in a 4:4:1:1 stoichiometry. Predominantly expressed in stomach, intestine, skeletal muscle, kidney, heart, testis, prostate and uterus.

It is found in the mitochondrion intermembrane space. The protein resides in the mitochondrion inner membrane. Calcium sensor of the mitochondrial calcium uniporter (MCU) channel, which senses calcium level via its EF-hand domains. MICU1 and MICU2 form a disulfide-linked heterodimer that stimulates and inhibits MCU activity, depending on the concentration of calcium. At low calcium levels, MICU1 occludes the pore of the MCU channel, preventing mitochondrial calcium uptake. At higher calcium levels, calcium-binding to MICU1 and MICU2 induces a conformational change that weakens MCU-MICU1 interactions and moves the MICU1-MICU2 heterodimer away from the pore, allowing calcium permeation through the MCU channel. The sequence is that of Calcium uptake protein 2, mitochondrial from Mus musculus (Mouse).